A 427-amino-acid chain; its full sequence is MSKIVDILAREILDSRGNPTVQAEVILDSGAEGSAMVPSGASTGAREAIELRDGDASRYGGKGVLKAVENVRGPIKAALTGMDAADQAAIDRRLIELDGSDNKGVLGANAILAVSLATAHAAAADAKKPLYAYLNRSGEFLLPVPMMNIINGGAHADNSIDMQEFMILPVGAPSFREALRYGAEVFHALKKVLSDRGLATGVGDEGGFAPNLPSNEAAIGIILEAIEKAGYRPGEDICLGLDVASSEFYSDGIYTLASEGRRFTSEEFSDHLAAWVDKYPIVSIEDGMAENDWHGWGIHTDRLGRRIQLVGDDLFVTNPAILKQGIEARIANSILIKVNQIGTLTETLEAIHIARKAGYTSVVSHRSGETEGTTIADIAVATCTGQIKTGSLSRSDRIAKYNRLLKIEEELGDKARYGGRGAVKNLA.

Position 163 (Gln163) interacts with (2R)-2-phosphoglycerate. Glu205 acts as the Proton donor in catalysis. The Mg(2+) site is built by Asp242, Glu285, and Asp312. Residues Lys337, Arg366, Ser367, and Lys388 each coordinate (2R)-2-phosphoglycerate. Lys337 (proton acceptor) is an active-site residue.

This sequence belongs to the enolase family. As to quaternary structure, component of the RNA degradosome, a multiprotein complex involved in RNA processing and mRNA degradation. Mg(2+) is required as a cofactor.

It localises to the cytoplasm. Its subcellular location is the secreted. The protein localises to the cell surface. The catalysed reaction is (2R)-2-phosphoglycerate = phosphoenolpyruvate + H2O. It participates in carbohydrate degradation; glycolysis; pyruvate from D-glyceraldehyde 3-phosphate: step 4/5. Its function is as follows. Catalyzes the reversible conversion of 2-phosphoglycerate (2-PG) into phosphoenolpyruvate (PEP). It is essential for the degradation of carbohydrates via glycolysis. This is Enolase 2 from Methylococcus capsulatus (strain ATCC 33009 / NCIMB 11132 / Bath).